Reading from the N-terminus, the 570-residue chain is Keratin, type I cytoskeletal 10 (570 aa).

Over residues 1-16 (MSVLYSSSSKQFSSSR) the composition is skewed to low complexity. The segment at 1 to 29 (MSVLYSSSSKQFSSSRSGGGGGGGSVRVS) is disordered. Residues 1-143 (MSVLYSSSSK…GDGGSLLSGN (143 aa)) form a head region. Phosphoserine is present on residues Ser15 and Ser17. At Arg32 the chain carries Asymmetric dimethylarginine; alternate. An Omega-N-methylarginine; alternate modification is found at Arg32. Phosphoserine is present on residues Ser34, Ser45, Ser48, and Ser168. The coil 1A stretch occupies residues 144-179 (GRVTMQNLNDRLASYMDKVRALEESNYELEGKIKEW). The IF rod domain occupies 144–458 (GRVTMQNLND…SLLEGEGSSS (315 aa)). The tract at residues 180–200 (YEKHGNSSQREPRDYSKYYKT) is linker 1. Residues 201–292 (IEDLKGQILT…KNHEEEMRDL (92 aa)) form a coil 1B region. Positions 293–315 (QNVSTGDVNVEMNAAPGVDLTQL) are linker 12. Residues 316 to 454 (LNNMRNQYEQ…QTYRSLLEGE (139 aa)) form a coil 2 region. Positions 451-570 (LEGEGSSSGG…GDQSSKGPRY (120 aa)) are disordered. The interval 455-570 (GSSSGGGGGR…GDQSSKGPRY (116 aa)) is tail. Residues 456–562 (SSSGGGGGRR…GGFKSSGGGD (107 aa)) are compositionally biased toward gly residues.

Belongs to the intermediate filament family. (Microbial infection) Interacts (via C-terminal tail domain) with the S.aureus clumping factor, clfB; this interaction probably mediates S.aureus attachment to the highly keratinized squamous epithelial cells from the nasal cavity. As to quaternary structure, heterotetramer of two type I and two type II keratins. Heterodimer with KRT1. Two heterodimers of KRT1 and KRT10 form a heterotetramer. The KRT10 subunit in the heterotetramer is probably disulfide-linked. Interacts with PLEC isoform 1C, when in a heterodimer with KRT1. In terms of assembly, (Microbial infection) Interacts (via the C-terminal tail domain) with S.pneumoniae serine-rich repeat protein PsrP; this interaction probably mediates S.pneumoniae adherence to lung tissue and subsequent pathogenesis. In terms of tissue distribution, expressed in the suprabasal layers of the epidermis throughout the entire sole (at protein level). Expressed in the infundibular regions of the ear, the interscale regions of the tail, and the interfollicular epidermis of the back. Expressed in lung tissue from young mice (at protein level).

The protein resides in the secreted. The protein localises to the extracellular space. It localises to the cell surface. Its subcellular location is the cytoplasm. Its function is as follows. Plays a role in the establishment of the epidermal barrier on plantar skin. Involved in the maintenance of cell layer development and keratin filament bundles in suprabasal cells of the epithelium. In terms of biological role, (Microbial infection) Acts as a mediator of S.aureus adherence to desquamated nasal epithelial cells via clfB, and hence may play a role in nasal colonization. Functionally, (Microbial infection) Binds S.pneumoniae PsrP, mediating adherence of the bacteria to lung cell lines. The chain is Keratin, type I cytoskeletal 10 (Krt10) from Mus musculus (Mouse).